A 433-amino-acid polypeptide reads, in one-letter code: WD repeat domain phosphoinositide-interacting protein 1 (433 aa).

Residues 127 to 132 carry the Nuclear receptor interaction motif; sequence LLKTLL. 2 WD repeats span residues 136–177 and 180–220; these read RNPH…CECT and AHDS…KLYE. Positions 221–224 match the L/FRRG motif motif; it reads FRRG. WD repeat units lie at residues 226 to 265 and 296 to 346; these read KRYV…ERSE and DRAF…GGEC.

The protein belongs to the WD repeat PROPPIN family.

Its subcellular location is the golgi apparatus. The protein localises to the trans-Golgi network. It localises to the endosome. The protein resides in the cytoplasmic vesicle. It is found in the clathrin-coated vesicle. Its subcellular location is the preautophagosomal structure membrane. The protein localises to the cytoplasm. It localises to the cytoskeleton. In terms of biological role, component of the autophagy machinery that controls the major intracellular degradation process by which cytoplasmic materials are packaged into autophagosomes and delivered to lysosomes for degradation. Plays an important role in starvation- and calcium-mediated autophagy, as well as in mitophagy. Functions downstream of the ulk1 and PI3-kinases that produce phosphatidylinositol 3-phosphate (PtdIns3P) on membranes of the endoplasmic reticulum once activated. Binds phosphatidylinositol 3-phosphate (PtdIns3P), and maybe other phosphoinositides including PtdIns3,5P2 and PtdIns5P, and is recruited to phagophore assembly sites at the endoplasmic reticulum membranes. There, it assists wipi2 in the recruitment of atg12-atg5-atg16l1, a complex that directly controls the elongation of the nascent autophagosomal membrane. Together with wdr45/wipi4, promotes atg2 (atg2a or atg2b)-mediated lipid transfer by enhancing atg2-association with phosphatidylinositol 3-monophosphate (PI3P)-containing membranes. The sequence is that of WD repeat domain phosphoinositide-interacting protein 1 (wipi1) from Xenopus laevis (African clawed frog).